We begin with the raw amino-acid sequence, 346 residues long: Phosphoribosylformylglycinamidine cyclo-ligase (346 aa).

The protein belongs to the AIR synthase family.

The protein resides in the cytoplasm. The catalysed reaction is 2-formamido-N(1)-(5-O-phospho-beta-D-ribosyl)acetamidine + ATP = 5-amino-1-(5-phospho-beta-D-ribosyl)imidazole + ADP + phosphate + H(+). Its pathway is purine metabolism; IMP biosynthesis via de novo pathway; 5-amino-1-(5-phospho-D-ribosyl)imidazole from N(2)-formyl-N(1)-(5-phospho-D-ribosyl)glycinamide: step 2/2. The polypeptide is Phosphoribosylformylglycinamidine cyclo-ligase (Vibrio parahaemolyticus serotype O3:K6 (strain RIMD 2210633)).